Consider the following 355-residue polypeptide: Ribosomal RNA small subunit methyltransferase H (355 aa).

S-adenosyl-L-methionine is bound by residues Gly55–His57, Asp75, Asp122, and Gln129. Residues Glu327–Arg355 are disordered.

Belongs to the methyltransferase superfamily. RsmH family.

The protein localises to the cytoplasm. It catalyses the reaction cytidine(1402) in 16S rRNA + S-adenosyl-L-methionine = N(4)-methylcytidine(1402) in 16S rRNA + S-adenosyl-L-homocysteine + H(+). In terms of biological role, specifically methylates the N4 position of cytidine in position 1402 (C1402) of 16S rRNA. In Bordetella avium (strain 197N), this protein is Ribosomal RNA small subunit methyltransferase H.